Reading from the N-terminus, the 380-residue chain is Ceramide-binding protein svf1 (380 aa).

The peripherally associates with membranes stretch occupies residues 1-18; sequence MKAWLQSSISYYTGTAEP.

The protein belongs to the SVF1 family.

The protein resides in the golgi apparatus. Its subcellular location is the cis-Golgi network membrane. It localises to the endoplasmic reticulum membrane. The protein localises to the cytoplasm. It is found in the nucleus. Its function is as follows. Ceramide-binding protein that may transfer ceramides from the endoplasmic reticulum membrane to the cis-Golgi network membrane, and is thereby required for the biosynthesis of complex sphingolipids. The chain is Ceramide-binding protein svf1 from Schizosaccharomyces pombe (strain 972 / ATCC 24843) (Fission yeast).